Here is a 157-residue protein sequence, read N- to C-terminus: Transcriptional regulator MraZ (157 aa).

2 SpoVT-AbrB domains span residues 7–52 and 83–126; these read TYTM…AGGN and SETL…EPER.

Belongs to the MraZ family. Forms oligomers.

It is found in the cytoplasm. Its subcellular location is the nucleoid. This chain is Transcriptional regulator MraZ, found in Xanthobacter autotrophicus (strain ATCC BAA-1158 / Py2).